We begin with the raw amino-acid sequence, 408 residues long: Multidrug resistance protein MdtG (408 aa).

A run of 11 helical transmembrane segments spans residues 16-36 (LIVA…VMPF), 58-78 (IVFS…GGLA), 92-112 (LGMG…QFLI), 115-135 (ALLG…ATQV), 146-166 (TLST…GLLA), 173-193 (PVFF…LLCI), 224-244 (LFVT…ILTL), 253-273 (VGNI…AALL), 290-310 (ILIA…FVQT), 319-339 (FLLG…LVYN), and 378-398 (AVFL…WNSL).

This sequence belongs to the major facilitator superfamily. DHA1 family. MdtG (TC 2.A.1.2.20) subfamily.

The protein localises to the cell inner membrane. Its function is as follows. Confers resistance to fosfomycin and deoxycholate. This is Multidrug resistance protein MdtG from Escherichia fergusonii (strain ATCC 35469 / DSM 13698 / CCUG 18766 / IAM 14443 / JCM 21226 / LMG 7866 / NBRC 102419 / NCTC 12128 / CDC 0568-73).